The primary structure comprises 292 residues: Pantothenate synthetase (292 aa).

Residue 30 to 37 participates in ATP binding; the sequence is MGALHEGH. Residue His-37 is the Proton donor of the active site. Residue Gln-61 participates in (R)-pantoate binding. Gln-61 is a binding site for beta-alanine. Residue 147–150 participates in ATP binding; it reads GEKD. Residue Gln-153 coordinates (R)-pantoate. 184–187 contributes to the ATP binding site; sequence VSSR.

The protein belongs to the pantothenate synthetase family. In terms of assembly, homodimer.

The protein resides in the cytoplasm. It carries out the reaction (R)-pantoate + beta-alanine + ATP = (R)-pantothenate + AMP + diphosphate + H(+). It participates in cofactor biosynthesis; (R)-pantothenate biosynthesis; (R)-pantothenate from (R)-pantoate and beta-alanine: step 1/1. Functionally, catalyzes the condensation of pantoate with beta-alanine in an ATP-dependent reaction via a pantoyl-adenylate intermediate. The protein is Pantothenate synthetase of Chlorobium phaeovibrioides (strain DSM 265 / 1930) (Prosthecochloris vibrioformis (strain DSM 265)).